Consider the following 187-residue polypeptide: Elongation factor P (187 aa).

It belongs to the elongation factor P family.

It is found in the cytoplasm. The protein operates within protein biosynthesis; polypeptide chain elongation. Its function is as follows. Involved in peptide bond synthesis. Stimulates efficient translation and peptide-bond synthesis on native or reconstituted 70S ribosomes in vitro. Probably functions indirectly by altering the affinity of the ribosome for aminoacyl-tRNA, thus increasing their reactivity as acceptors for peptidyl transferase. This chain is Elongation factor P, found in Mycolicibacterium smegmatis (strain ATCC 700084 / mc(2)155) (Mycobacterium smegmatis).